An 83-amino-acid chain; its full sequence is Cyclin-dependent kinases regulatory subunit 2 (83 aa).

It belongs to the CKS family. In terms of assembly, interacts with CDKA-1, CYCD2-1 and AT4G14310.

Binds to the catalytic subunit of the cyclin dependent kinases and is essential for their biological function. This chain is Cyclin-dependent kinases regulatory subunit 2 (CKS2), found in Arabidopsis thaliana (Mouse-ear cress).